The primary structure comprises 739 residues: Thiamine biosynthesis multifunctional protein ThiED (739 aa).

The tract at residues Met-1–Leu-210 is thiamine-phosphate synthase. 4-amino-2-methyl-5-(diphosphooxymethyl)pyrimidine contacts are provided by residues Gln-37–Lys-41 and Asn-69. Mg(2+)-binding residues include Asp-70 and Asp-88. Thr-107 contributes to the 4-amino-2-methyl-5-(diphosphooxymethyl)pyrimidine binding site. Position 140 to 142 (Thr-140 to Thr-142) interacts with 2-[(2R,5Z)-2-carboxy-4-methylthiazol-5(2H)-ylidene]ethyl phosphate. Lys-143 is a binding site for 4-amino-2-methyl-5-(diphosphooxymethyl)pyrimidine. 2-[(2R,5Z)-2-carboxy-4-methylthiazol-5(2H)-ylidene]ethyl phosphate is bound by residues Gly-174 and Val-194–Ser-195. The interval Leu-226–Phe-481 is hydroxymethylpyrimidine/phosphomethylpyrimidine kinase. Gln-263 is a 4-amino-5-hydroxymethyl-2-methylpyrimidine binding site. The tract at residues Tyr-527 to Asn-739 is thiaminase-2.

This sequence in the N-terminal section; belongs to the thiamine-phosphate synthase family. In the central section; belongs to the ThiD family. The protein in the C-terminal section; belongs to the thiaminase-2 family. The cofactor is Mg(2+).

The catalysed reaction is 2-[(2R,5Z)-2-carboxy-4-methylthiazol-5(2H)-ylidene]ethyl phosphate + 4-amino-2-methyl-5-(diphosphooxymethyl)pyrimidine + 2 H(+) = thiamine phosphate + CO2 + diphosphate. It catalyses the reaction 2-(2-carboxy-4-methylthiazol-5-yl)ethyl phosphate + 4-amino-2-methyl-5-(diphosphooxymethyl)pyrimidine + 2 H(+) = thiamine phosphate + CO2 + diphosphate. It carries out the reaction 4-methyl-5-(2-phosphooxyethyl)-thiazole + 4-amino-2-methyl-5-(diphosphooxymethyl)pyrimidine + H(+) = thiamine phosphate + diphosphate. The enzyme catalyses 4-amino-5-hydroxymethyl-2-methylpyrimidine + ATP = 4-amino-2-methyl-5-(phosphooxymethyl)pyrimidine + ADP + H(+). The catalysed reaction is 4-amino-2-methyl-5-(phosphooxymethyl)pyrimidine + ATP = 4-amino-2-methyl-5-(diphosphooxymethyl)pyrimidine + ADP. It participates in cofactor biosynthesis; thiamine diphosphate biosynthesis; 4-amino-2-methyl-5-diphosphomethylpyrimidine from 5-amino-1-(5-phospho-D-ribosyl)imidazole: step 3/3. The protein operates within cofactor biosynthesis; thiamine diphosphate biosynthesis; thiamine phosphate from 4-amino-2-methyl-5-diphosphomethylpyrimidine and 4-methyl-5-(2-phosphoethyl)-thiazole: step 1/1. Condenses 4-methyl-5-(beta-hydroxyethyl)thiazole monophosphate (THZ-P) and 2-methyl-4-amino-5-hydroxymethyl pyrimidine pyrophosphate (HMP-PP) to form thiamine monophosphate (TMP). Functionally, catalyzes the phosphorylation of hydroxymethylpyrimidine phosphate (HMP-P) to HMP-PP, and of HMP to HMP-P. The polypeptide is Thiamine biosynthesis multifunctional protein ThiED (thiED) (Corynebacterium efficiens (strain DSM 44549 / YS-314 / AJ 12310 / JCM 11189 / NBRC 100395)).